A 511-amino-acid chain; its full sequence is Cytochrome P450 93B2 (511 aa).

Residues 4 to 24 (LQLIFLLFFFPTLLFLYCLPY) traverse the membrane as a helical segment. Position 447 (Cys447) interacts with heme.

Belongs to the cytochrome P450 family. Heme is required as a cofactor.

It localises to the membrane. The catalysed reaction is a flavanone + reduced [NADPH--hemoprotein reductase] + O2 = a flavone + oxidized [NADPH--hemoprotein reductase] + 2 H2O + H(+). It functions in the pathway secondary metabolite biosynthesis; flavonoid biosynthesis. Its function is as follows. Functions as a flavone synthase II (FNSII) that catalyzes the direct conversion of flavanones to flavones. In vitro, can convert liquiritigenin, naringenin and eriodictyol to 7,4'-dihydroxyflavone, apigenin and luteolin, respectively. This Gerbera hybrida (Daisy) protein is Cytochrome P450 93B2.